Here is a 218-residue protein sequence, read N- to C-terminus: Claudin-3 (218 aa).

Topologically, residues 1–8 (MSMGLEIA) are cytoplasmic. The helical transmembrane segment at 9–29 (GTSLAVLGWLSTIVCCALPMW) threads the bilayer. Residues 30-80 (RVTAFIGSSIITAQITWEGLWMNCVVQSTGQMQCKVYDSLLALPQDLQAAR) are Extracellular-facing. The chain crosses the membrane as a helical span at residues 81–101 (ALIVVSILLAAFGLLVALVGA). The Cytoplasmic portion of the chain corresponds to 102 to 115 (QCTNCVQDDTAKAK). Residues 116-136 (ITIVAGVLFLLAALLTLVPVS) form a helical membrane-spanning segment. The Extracellular segment spans residues 137–159 (WSANTIIRDFYNPLVPDAQKREM). The helical transmembrane segment at 160 to 180 (GAGLYVGWAAAALQLLGGALL) threads the bilayer. The Cytoplasmic segment spans residues 181–218 (CCSCPPRDKKYAPTKIVYSAPRSAGPGTSTAYDRKDYV). Y198 bears the Phosphotyrosine mark. Residues S199 and S209 each carry the phosphoserine modification. Residues 217–218 (YV) form an interactions with TJP1, TJP2 and TJP3 region.

This sequence belongs to the claudin family. In terms of assembly, can form homo- and heteropolymers with other CLDN. Homopolymers interact with CLDN1 and CLDN2 homopolymers. Interacts in cis (within the same plasma membrane) with CLDN19. Directly interacts with TJP1/ZO-1, TJP2/ZO-2 and TJP3/ZO-3.

It is found in the cell junction. The protein resides in the tight junction. It localises to the cell membrane. Plays a major role in tight junction-specific obliteration of the intercellular space, through calcium-independent cell-adhesion activity. The protein is Claudin-3 (CLDN3) of Canis lupus familiaris (Dog).